We begin with the raw amino-acid sequence, 611 residues long: MSQAGVERLLKGLQILVLVLRLSAGYFPEERWNPESPFRSPTVLIAVLARNSEGSLPEVLGALDRLHYPKERISLWVATDHNFDNTSQILREWLINVQNQYHHVEWRPQEHPRWFRDEESPKHWSHSRYEYVMKLRQAALTSAREMWADYIFFLDADNLLTNSETLNLLIAENKTVVAPMLESRAAYSNFWCGMTTQGYYRRTPAYMPIRRRERQGCFPVPMVHSTFLIDLRKEASQQLDFYPPHADYTWAFDDIIVFAFSCRQAEVQMFLCNKEIYGYLPVPLRSHSTLLDETDNFLHTKLEAMVKGPQVHPSSFVTIPKKVPDKMSFDEVFLINLKHRQDRRERMKRTLYELQIDFKLVDAVYGKMLNQSNVTEMGIKMLPGYKDPYHGRPLTRGEMGCFLSHYNIWKEISERNLEVSAVLEDDLRFEIFFKRRLQTLLHDLEIAKLDWDLIYLGRKRMQVDEPEEPVPGVRNLVVSDYSYWTLGYLISLRGARKLLNAEPLGKMLPVDEFLPVMYDKHPISDYSSHFSTRDLRAFSVEPLLLYPTHYTGDKGYISDTETSVLWDNVTQPTDWDRAKSRKTHQQEKLRSEALNTPSMGSPFDNTARDEL.

A signal peptide spans 1-24 (MSQAGVERLLKGLQILVLVLRLSA). N-linked (GlcNAc...) asparagine glycosylation is found at Asn-85, Asn-173, Asn-370, Asn-373, and Asn-568. Residues 576 to 591 (DRAKSRKTHQQEKLRS) are compositionally biased toward basic and acidic residues. Positions 576-611 (DRAKSRKTHQQEKLRSEALNTPSMGSPFDNTARDEL) are disordered. A Prevents secretion from ER motif is present at residues 608 to 611 (RDEL).

Belongs to the glycosyltransferase 25 family.

The protein localises to the endoplasmic reticulum lumen. It catalyses the reaction (5R)-5-hydroxy-L-lysyl-[collagen] + UDP-alpha-D-galactose = (5R)-5-O-(beta-D-galactosyl)-5-hydroxy-L-lysyl-[collagen] + UDP + H(+). Its function is as follows. Beta-galactosyltransferase that transfers beta-galactose to hydroxylysine residues of type I collagen. By acting on collagen glycosylation, facilitates the formation of collagen triple helix. The sequence is that of Procollagen galactosyltransferase 1-B (colgalt1-b) from Xenopus laevis (African clawed frog).